The following is a 96-amino-acid chain: Accessory cholera enterotoxin (96 aa).

A helical membrane pass occupies residues 76–96; it reads QALAIVLQALMTRFALRALNL.

Its subcellular location is the secreted. It is found in the host cell membrane. Increases short-circuit current in rabbit ileal tissue mounted in Ussing chambers, by increasing the potential difference. Cultures of V.cholerae containing the cloned ace gene cause fluid secretion in ligated rabbit ileal loops. This is Accessory cholera enterotoxin (ace) from Vibrio cholerae serotype O1 (strain ATCC 39315 / El Tor Inaba N16961).